Consider the following 102-residue polypeptide: MIHKLTSEERKTRLEDLPHWTAVAGRDAIQRRLRFADFNEAFGFMTRVAIKAQEMNHHPEWFNVYNRVDITLSTHDADGLTERDIELARFIDGAAAHAQPGA.

Belongs to the pterin-4-alpha-carbinolamine dehydratase family.

The catalysed reaction is (4aS,6R)-4a-hydroxy-L-erythro-5,6,7,8-tetrahydrobiopterin = (6R)-L-erythro-6,7-dihydrobiopterin + H2O. This is Putative pterin-4-alpha-carbinolamine dehydratase from Burkholderia orbicola (strain MC0-3).